Here is a 466-residue protein sequence, read N- to C-terminus: Cysteine--tRNA ligase (466 aa).

Cysteine 28 lines the Zn(2+) pocket. The 'HIGH' region signature appears at 30 to 40 (PTVYNYIHIGN). Zn(2+)-binding residues include cysteine 208, histidine 233, and glutamate 237. A 'KMSKS' region motif is present at residues 265 to 269 (KMSKS). Lysine 268 contacts ATP.

This sequence belongs to the class-I aminoacyl-tRNA synthetase family. In terms of assembly, monomer. It depends on Zn(2+) as a cofactor.

Its subcellular location is the cytoplasm. The enzyme catalyses tRNA(Cys) + L-cysteine + ATP = L-cysteinyl-tRNA(Cys) + AMP + diphosphate. The protein is Cysteine--tRNA ligase of Staphylococcus aureus (strain bovine RF122 / ET3-1).